The chain runs to 125 residues: uncharacterized protein (125 aa).

A helical transmembrane segment spans residues 96–113; the sequence is LFMMSIVSSYVCYITVLL.

Its subcellular location is the membrane. This is an uncharacterized protein from Saccharomyces cerevisiae (strain ATCC 204508 / S288c) (Baker's yeast).